The primary structure comprises 316 residues: MELRNSTLGSGFILVGILNDSGSPELLYATFTILYMLALTSNGLLLLAITIEARLHMPMYLLLGQLSLMDLLFTSVVTPKALADFLRRENTISFGGCALQMFLALTMGSAEDLLLAFMAYDRYVAICHPLKYMTLMSPRVCWIMVATSWILASLIAIGHTMYTMHLPFCVSWEIRHLLCEIPPLLKLACADTSRYELIIYVTGVTFLLLPISAIVASYTLVLFTVLRMPSNEGRKKALVTCSSHLIVVGMFYGAATFMYVLPSSFHSPKQDNIISVFYTIVTPALNPLIYSLRNKEVMRALRRVLGKYILLAHSTL.

Over 1 to 30 the chain is Extracellular; that stretch reads MELRNSTLGSGFILVGILNDSGSPELLYAT. Residues Asn5 and Asn19 are each glycosylated (N-linked (GlcNAc...) asparagine). Residues 31–51 traverse the membrane as a helical segment; that stretch reads FTILYMLALTSNGLLLLAITI. Over 52–56 the chain is Cytoplasmic; the sequence is EARLH. Residues 57–77 traverse the membrane as a helical segment; it reads MPMYLLLGQLSLMDLLFTSVV. Topologically, residues 78–97 are extracellular; it reads TPKALADFLRRENTISFGGC. Cys97 and Cys179 are disulfide-bonded. Residues 98–118 traverse the membrane as a helical segment; it reads ALQMFLALTMGSAEDLLLAFM. Topologically, residues 119 to 139 are cytoplasmic; that stretch reads AYDRYVAICHPLKYMTLMSPR. Residues 140 to 160 form a helical membrane-spanning segment; sequence VCWIMVATSWILASLIAIGHT. Topologically, residues 161–205 are extracellular; the sequence is MYTMHLPFCVSWEIRHLLCEIPPLLKLACADTSRYELIIYVTGVT. The helical transmembrane segment at 206-226 threads the bilayer; it reads FLLLPISAIVASYTLVLFTVL. Residues 227–244 are Cytoplasmic-facing; that stretch reads RMPSNEGRKKALVTCSSH. Residues 245 to 265 traverse the membrane as a helical segment; it reads LIVVGMFYGAATFMYVLPSSF. At 266-271 the chain is on the extracellular side; the sequence is HSPKQD. A helical membrane pass occupies residues 272–292; the sequence is NIISVFYTIVTPALNPLIYSL. Over 293–316 the chain is Cytoplasmic; it reads RNKEVMRALRRVLGKYILLAHSTL.

It belongs to the G-protein coupled receptor 1 family.

It is found in the cell membrane. Odorant receptor. This is Olfactory receptor 2AG2 (OR2AG2) from Homo sapiens (Human).